Here is a 175-residue protein sequence, read N- to C-terminus: dATP triphosphohydrolase (175 aa).

Residue Arg19 participates in dATP binding. Co(2+) contacts are provided by His34, His66, Asp67, Glu70, Asp75, and Asp119.

It belongs to the Caudovirales dATP triphosphohydrolase family. As to quaternary structure, homohexamer. Co(2+) serves as cofactor. The cofactor is Zn(2+).

It catalyses the reaction dATP + H2O = 2'-deoxyadenosine + triphosphate + H(+). The enzyme catalyses dADP + H2O = 2'-deoxyadenosine + diphosphate. The catalysed reaction is dAMP + H2O = 2'-deoxyadenosine + phosphate. Functionally, catalyzes the hydrolysis of dATP, dADP and dAMP into dA. This step is essential for Z-genome synthesis (containing aminoadenine instead of adenine). Specifically removes dATP and its precursor dADP from the nucleotide pool of the host, preventing the incorporation of A into the phage genome and favoring the integration of the Z-base into the viral genome. In Cyanophage S-2L (Cyanobacteria phage S-2L), this protein is dATP triphosphohydrolase (datZ).